Reading from the N-terminus, the 207-residue chain is tRNA (pseudouridine(54)-N(1))-methyltransferase (207 aa).

L137 provides a ligand contact to S-adenosyl-L-methionine.

It belongs to the methyltransferase superfamily. TrmY family. Homodimer.

It localises to the cytoplasm. The catalysed reaction is pseudouridine(54) in tRNA + S-adenosyl-L-methionine = N(1)-methylpseudouridine(54) in tRNA + S-adenosyl-L-homocysteine + H(+). Functionally, specifically catalyzes the N1-methylation of pseudouridine at position 54 (Psi54) in tRNAs. The polypeptide is tRNA (pseudouridine(54)-N(1))-methyltransferase (Halorubrum lacusprofundi (strain ATCC 49239 / DSM 5036 / JCM 8891 / ACAM 34)).